The following is a 193-amino-acid chain: Adenine phosphoribosyltransferase (193 aa).

Belongs to the purine/pyrimidine phosphoribosyltransferase family. Homodimer.

The protein resides in the cytoplasm. The catalysed reaction is AMP + diphosphate = 5-phospho-alpha-D-ribose 1-diphosphate + adenine. The protein operates within purine metabolism; AMP biosynthesis via salvage pathway; AMP from adenine: step 1/1. In terms of biological role, catalyzes a salvage reaction resulting in the formation of AMP, that is energically less costly than de novo synthesis. In Bifidobacterium animalis subsp. lactis (strain AD011), this protein is Adenine phosphoribosyltransferase.